The chain runs to 628 residues: Leucine-rich repeat and fibronectin type-III domain-containing protein 3 (628 aa).

A signal peptide spans 1–16 (MAILPLLLCLLPLAPA). Residues 17 to 539 (SSPPQSATPS…PHAPFLGGTM (523 aa)) lie on the Extracellular side of the membrane. The LRRNT domain maps to 19–59 (PPQSATPSPCPRRCRCQTQSLPLSVLCPGAGLLFVPPSLDR). LRR repeat units lie at residues 60–83 (RAAE…ANMT), 84–105 (GLLH…AFAD), 108–129 (ALRA…QLRG), 132–153 (NLRH…ALDD), 157–178 (TLED…ALGR), 181–202 (NVNT…AFSR), and 205–226 (KLAR…PLFS). An N-linked (GlcNAc...) asparagine glycan is attached at asparagine 81. Residues 249–295 (NPLHCNCELVWLRRLAREDDLEACASPPALGGRYFWAVGEEEFVCEP) form the LRRCT domain. Positions 295–382 (PPVVTHRSPP…GEATAAVELT (88 aa)) constitute an Ig-like domain. Cysteine 317 and cysteine 366 are disulfide-bonded. N-linked (GlcNAc...) asparagine glycans are attached at residues asparagine 339, asparagine 348, and asparagine 393. A disordered region spans residues 382–430 (TVGPPPPPQLANSTSCDPPRDGDPDALTPPSAASASAKVADTGPPTDRG). Over residues 406–422 (DALTPPSAASASAKVAD) the composition is skewed to low complexity. The Fibronectin type-III domain occupies 425 to 523 (PPTDRGVQVT…GCARFSTEPA (99 aa)). N-linked (GlcNAc...) asparagine glycosylation occurs at asparagine 462. Residues 540 to 560 (IIALGGVIVASVLVFIFVLLM) traverse the membrane as a helical segment. At 561-628 (RYKVHGGQPP…WGPGHEPVGP (68 aa)) the chain is on the cytoplasmic side.

Belongs to the LRFN family. Can form heteromeric complexes with LRFN1, LRFN2, LRFN4 and LRFN5. Able to form homomeric complexes across cell junctions, between adjacent cells. Does not interact with DLG4. In terms of processing, N-glycosylated.

Its subcellular location is the cell membrane. The protein resides in the cell projection. It localises to the axon. It is found in the dendrite. The protein localises to the synapse. Its subcellular location is the presynaptic cell membrane. The protein resides in the postsynaptic cell membrane. Its function is as follows. Cell adhesion molecule that mediates homophilic cell-cell adhesion in a Ca(2+)-independent manner. Promotes neurite outgrowth in hippocampal neurons. The polypeptide is Leucine-rich repeat and fibronectin type-III domain-containing protein 3 (LRFN3) (Homo sapiens (Human)).